The following is a 195-amino-acid chain: Probable molybdenum cofactor guanylyltransferase (195 aa).

Residues 9-11 (LAG), K21, D69, and D100 each bind GTP. D100 contributes to the Mg(2+) binding site.

This sequence belongs to the MobA family. Mg(2+) is required as a cofactor.

It is found in the cytoplasm. It carries out the reaction Mo-molybdopterin + GTP + H(+) = Mo-molybdopterin guanine dinucleotide + diphosphate. Transfers a GMP moiety from GTP to Mo-molybdopterin (Mo-MPT) cofactor (Moco or molybdenum cofactor) to form Mo-molybdopterin guanine dinucleotide (Mo-MGD) cofactor. The sequence is that of Probable molybdenum cofactor guanylyltransferase from Geobacillus sp. (strain WCH70).